The primary structure comprises 399 residues: Succinate--CoA ligase [ADP-forming] subunit beta (399 aa).

The 246-residue stretch at 9 to 254 (KAVLAEFGVA…ESEEDPKEIE (246 aa)) folds into the ATP-grasp domain. ATP contacts are provided by residues lysine 46, 53–55 (GRG), glutamate 109, alanine 112, and glutamate 117. Mg(2+) is bound by residues asparagine 209 and aspartate 223. Residues asparagine 274 and 331 to 333 (GIM) each bind substrate.

Belongs to the succinate/malate CoA ligase beta subunit family. Heterotetramer of two alpha and two beta subunits. Mg(2+) serves as cofactor.

It catalyses the reaction succinate + ATP + CoA = succinyl-CoA + ADP + phosphate. It carries out the reaction GTP + succinate + CoA = succinyl-CoA + GDP + phosphate. The protein operates within carbohydrate metabolism; tricarboxylic acid cycle; succinate from succinyl-CoA (ligase route): step 1/1. Its function is as follows. Succinyl-CoA synthetase functions in the citric acid cycle (TCA), coupling the hydrolysis of succinyl-CoA to the synthesis of either ATP or GTP and thus represents the only step of substrate-level phosphorylation in the TCA. The beta subunit provides nucleotide specificity of the enzyme and binds the substrate succinate, while the binding sites for coenzyme A and phosphate are found in the alpha subunit. The protein is Succinate--CoA ligase [ADP-forming] subunit beta of Phenylobacterium zucineum (strain HLK1).